We begin with the raw amino-acid sequence, 453 residues long: Signal recognition particle protein (453 aa).

GTP is bound by residues 107–114, 190–194, and 248–251; these read GLQGAGKT, DTAGR, and TKVD.

It belongs to the GTP-binding SRP family. SRP54 subfamily. As to quaternary structure, part of the signal recognition particle protein translocation system, which is composed of SRP and FtsY. SRP is a ribonucleoprotein composed of Ffh and a 4.5S RNA molecule.

Its subcellular location is the cytoplasm. It carries out the reaction GTP + H2O = GDP + phosphate + H(+). In terms of biological role, involved in targeting and insertion of nascent membrane proteins into the cytoplasmic membrane. Binds to the hydrophobic signal sequence of the ribosome-nascent chain (RNC) as it emerges from the ribosomes. The SRP-RNC complex is then targeted to the cytoplasmic membrane where it interacts with the SRP receptor FtsY. Interaction with FtsY leads to the transfer of the RNC complex to the Sec translocase for insertion into the membrane, the hydrolysis of GTP by both Ffh and FtsY, and the dissociation of the SRP-FtsY complex into the individual components. The polypeptide is Signal recognition particle protein (Escherichia coli O157:H7).